Here is a 255-residue protein sequence, read N- to C-terminus: Homeobox-leucine zipper protein ATHB-23 (255 aa).

Positions 68 to 127 (MGEKKRRLNMEQLKALEKDFELGNKLESDRKLELARALGLQPRQIAIWFQNRRARSKTKQ) form a DNA-binding region, homeobox. Positions 128–163 (LEKDYDMLKRQFESLRDENEVLQTQNQKLQAQVMAL) are leucine-zipper.

Belongs to the HD-ZIP homeobox family. Class I subfamily. Expressed in young leaves, in the adaxial domain of leaf primordia and the rib meristem. Expressed in the styles of flowers and siliques.

The protein resides in the nucleus. Functionally, probable transcription factor. The polypeptide is Homeobox-leucine zipper protein ATHB-23 (ATHB-23) (Arabidopsis thaliana (Mouse-ear cress)).